We begin with the raw amino-acid sequence, 148 residues long: Ribonuclease H (148 aa).

Residues 2–143 form the RNase H type-1 domain; that stretch reads TADIIYIYSD…ADVLANQGVL (142 aa). Positions 11, 49, 71, and 135 each coordinate Mg(2+).

It belongs to the RNase H family. In terms of assembly, monomer. Mg(2+) is required as a cofactor.

The protein resides in the cytoplasm. It carries out the reaction Endonucleolytic cleavage to 5'-phosphomonoester.. Its function is as follows. Endonuclease that specifically degrades the RNA of RNA-DNA hybrids. This chain is Ribonuclease H, found in Thiobacillus denitrificans (strain ATCC 25259 / T1).